Consider the following 387-residue polypeptide: 3-ketoacyl-CoA thiolase (387 aa).

The Acyl-thioester intermediate role is filled by C91. Residues H343 and C373 each act as proton acceptor in the active site.

Belongs to the thiolase-like superfamily. Thiolase family. As to quaternary structure, heterotetramer of two alpha chains (FadB) and two beta chains (FadA).

It is found in the cytoplasm. It carries out the reaction an acyl-CoA + acetyl-CoA = a 3-oxoacyl-CoA + CoA. Its pathway is lipid metabolism; fatty acid beta-oxidation. Functionally, catalyzes the final step of fatty acid oxidation in which acetyl-CoA is released and the CoA ester of a fatty acid two carbons shorter is formed. The chain is 3-ketoacyl-CoA thiolase from Escherichia coli O1:K1 / APEC.